A 72-amino-acid polypeptide reads, in one-letter code: MAQRDTGGGQQRTGRRDDETAEAEVEESGASDLKERHEKLSEDVDSLLDEIDDVLEENAEEFVKGYVQKGGQ.

The span at 1 to 11 (MAQRDTGGGQQ) shows a compositional bias: gly residues. The segment at 1-41 (MAQRDTGGGQQRTGRRDDETAEAEVEESGASDLKERHEKLS) is disordered. Positions 19 to 29 (ETAEAEVEESG) are enriched in acidic residues. A coiled-coil region spans residues 22–61 (EAEVEESGASDLKERHEKLSEDVDSLLDEIDDVLEENAEE). The segment at 28 to 66 (SGASDLKERHEKLSEDVDSLLDEIDDVLEENAEEFVKGY) is ARC ATPase binding. Over residues 32–41 (DLKERHEKLS) the composition is skewed to basic and acidic residues. Gln-72 carries the post-translational modification Deamidated glutamine. Gln-72 participates in a covalent cross-link: Isoglutamyl lysine isopeptide (Gln-Lys) (interchain with K-? in acceptor proteins).

This sequence belongs to the prokaryotic ubiquitin-like protein family. As to quaternary structure, strongly interacts with the proteasome-associated ATPase ARC through a hydrophobic interface; the interacting region of Pup lies in its C-terminal half. There is one Pup binding site per ARC hexamer ring. Is modified by deamidation of its C-terminal glutamine to glutamate by the deamidase Dop, a prerequisite to the subsequent pupylation process.

Its pathway is protein degradation; proteasomal Pup-dependent pathway. Its function is as follows. Protein modifier that is covalently attached to lysine residues of substrate proteins, thereby targeting them for proteasomal degradation. The tagging system is termed pupylation. The sequence is that of Prokaryotic ubiquitin-like protein Pup from Parafrankia sp. (strain EAN1pec).